The chain runs to 679 residues: DNA-directed RNA polymerase subunit beta' (679 aa).

4 residues coordinate Zn(2+): Cys69, Cys71, Cys87, and Cys90. Positions 489, 491, and 493 each coordinate Mg(2+).

This sequence belongs to the RNA polymerase beta' chain family. RpoC1 subfamily. In plastids the minimal PEP RNA polymerase catalytic core is composed of four subunits: alpha, beta, beta', and beta''. When a (nuclear-encoded) sigma factor is associated with the core the holoenzyme is formed, which can initiate transcription. Mg(2+) is required as a cofactor. The cofactor is Zn(2+).

It is found in the plastid. It localises to the chloroplast. The catalysed reaction is RNA(n) + a ribonucleoside 5'-triphosphate = RNA(n+1) + diphosphate. DNA-dependent RNA polymerase catalyzes the transcription of DNA into RNA using the four ribonucleoside triphosphates as substrates. The chain is DNA-directed RNA polymerase subunit beta' from Phalaenopsis aphrodite subsp. formosana (Moth orchid).